Reading from the N-terminus, the 415-residue chain is Beta-1,4-glucuronyltransferase 1 (415 aa).

At 1–8 the chain is on the cytoplasmic side; the sequence is MQMSYAIR. A helical; Signal-anchor for type II membrane protein membrane pass occupies residues 9–36; that stretch reads CAFYQLLLAALMLVAMLQLLYLSLLSGL. Residues 37–415 lie on the Lumenal side of the membrane; that stretch reads HGQEEQDQYF…AKYPDSPRHC (379 aa). N204 is a glycosylation site (N-linked (GlcNAc...) asparagine). Positions 227 and 229 each coordinate Mn(2+). N-linked (GlcNAc...) asparagine glycosylation is present at N300.

The protein belongs to the glycosyltransferase 49 family. As to quaternary structure, interacts with LARGE1 and LARGE2. It depends on Mn(2+) as a cofactor.

It is found in the golgi apparatus membrane. It catalyses the reaction 3-O-[beta-D-Xyl-(1-&gt;4)-Rib-ol-P-Rib-ol-P-3-beta-D-GalNAc-(1-&gt;3)-beta-D-GlcNAc-(1-&gt;4)-(O-6-P-alpha-D-Man)]-Thr-[protein] + UDP-alpha-D-glucuronate = 3-O-[beta-D-GlcA-(1-&gt;3)-beta-D-Xyl-(1-&gt;4)-Rib-ol-P-Rib-ol-P-3-beta-D-GalNAc-(1-&gt;3)-beta-D-GlcNAc-(1-&gt;4)-(O-6-P-alpha-D-Man)]-Thr-[protein] + UDP + H(+). The protein operates within protein modification; protein glycosylation. Beta-1,4-glucuronyltransferase involved in O-mannosylation of alpha-dystroglycan (DAG1). Transfers a glucuronic acid (GlcA) residue onto a xylose (Xyl) acceptor to produce the glucuronyl-beta-1,4-xylose-beta disaccharide primer, which is further elongated by LARGE1, during synthesis of phosphorylated O-mannosyl glycan. Phosphorylated O-mannosyl glycan is a carbohydrate structure present in alpha-dystroglycan (DAG1), which is required for binding laminin G-like domain-containing extracellular proteins with high affinity. Required for axon guidance; via its function in O-mannosylation of alpha-dystroglycan (DAG1). In Bos taurus (Bovine), this protein is Beta-1,4-glucuronyltransferase 1.